We begin with the raw amino-acid sequence, 456 residues long: Phosphoglucomutase/phosphomannomutase (456 aa).

Ser101 (phosphoserine intermediate) is an active-site residue. Residues Ser101, Asp243, Asp245, and Asp247 each contribute to the Mg(2+) site. Ser101 is subject to Phosphoserine; by autocatalysis.

The protein belongs to the phosphohexose mutase family. In terms of assembly, homotetramer. Mg(2+) is required as a cofactor. Activated by phosphorylation.

It catalyses the reaction alpha-D-glucose 1-phosphate = alpha-D-glucose 6-phosphate. The enzyme catalyses alpha-D-mannose 1-phosphate = D-mannose 6-phosphate. Its function is as follows. Catalyzes the interconversion of glucose 1-phosphate and glucose 6-phosphate, and the interconversion of mannose 1-phosphate and mannose 6-phosphate. Also displays low activity with deoxyribose 1-phosphate and glucosamine 1-phosphate. This Thermococcus kodakarensis (strain ATCC BAA-918 / JCM 12380 / KOD1) (Pyrococcus kodakaraensis (strain KOD1)) protein is Phosphoglucomutase/phosphomannomutase.